The primary structure comprises 517 residues: Protein disulfide-isomerase A5 (517 aa).

A signal peptide spans 1 to 21; the sequence is MARAWGLLLAIGVILPTWLSS. Intrachain disulfides connect C83–C92, C180–C183, C303–C306, and C424–C427. 3 consecutive Thioredoxin domains span residues 132 to 259, 268 to 382, and 376 to 504; these read FLKD…NPQP, PWAD…NPEA, and WMQN…TLRE. The Prevents secretion from ER motif lies at 514–517; the sequence is REDL.

It belongs to the protein disulfide isomerase family.

It localises to the endoplasmic reticulum lumen. It catalyses the reaction Catalyzes the rearrangement of -S-S- bonds in proteins.. The chain is Protein disulfide-isomerase A5 (Pdia5) from Rattus norvegicus (Rat).